Consider the following 362-residue polypeptide: Salactin (362 aa).

Acidic residues predominate over residues 1–10 (MSDDTEDDSG). The disordered stretch occupies residues 1-28 (MSDDTEDDSGGESTADMEFGEQPAPLGV).

In terms of assembly, forms dynamically unstable filaments. Monomers are added at the growing filament end. In vitro, salactin polymerizes in the presence of ATP and AMP-PNP but not in the presence of ADP, GTP, ATPgammaS or buffer alone.

The protein localises to the cytoplasm. Actin homolog which might be involved in partitioning DNA between daughter cells when chromosomal copy number is low. This Halobacterium salinarum (strain ATCC 700922 / JCM 11081 / NRC-1) (Halobacterium halobium) protein is Salactin.